A 127-amino-acid polypeptide reads, in one-letter code: Ribonuclease P protein component (127 aa).

This sequence belongs to the RnpA family. Consists of a catalytic RNA component (M1 or rnpB) and a protein subunit.

The catalysed reaction is Endonucleolytic cleavage of RNA, removing 5'-extranucleotides from tRNA precursor.. Its function is as follows. RNaseP catalyzes the removal of the 5'-leader sequence from pre-tRNA to produce the mature 5'-terminus. It can also cleave other RNA substrates such as 4.5S RNA. The protein component plays an auxiliary but essential role in vivo by binding to the 5'-leader sequence and broadening the substrate specificity of the ribozyme. This Prochlorococcus marinus (strain SARG / CCMP1375 / SS120) protein is Ribonuclease P protein component.